The chain runs to 1518 residues: WD repeat-containing protein 62 (1518 aa).

Ala2 bears the N-acetylalanine mark. Ser33 is modified (phosphoserine). At Thr46 the chain carries Phosphothreonine. Position 49 is a phosphoserine (Ser49). Residue Thr50 is modified to Phosphothreonine. Ser52 is modified (phosphoserine). WD repeat units lie at residues 109-150 (TARK…QVAE), 153-194 (GHKY…VVAS), 196-234 (KVSC…ETKV), 291-330 (INLK…YLAN), 357-396 (AVYP…RVGK), 402-450 (FHSS…DSHW), 490-529 (DVKA…ELVK), 532-574 (AHDA…NLEQ), 578-618 (DHSS…DGLH), 626-665 (AEKT…QKKC), 671-713 (GDEG…KMFG), and 714-752 (HSEI…TNCM). Ser501 is subject to Phosphoserine. Positions 762–772 (RQQQQHTNDKK) are enriched in basic and acidic residues. Disordered regions lie at residues 762 to 824 (RQQQ…DPDP) and 908 to 935 (ASLL…KESS). A compositionally biased stretch (polar residues) spans 781–790 (TYVSTPSEIH). The span at 797–809 (QTEDDLEEECEPE) shows a compositional bias: acidic residues. The WD 13 repeat unit spans residues 803-846 (EEECEPEEMLKTPSKDSLDPDPRCLLTNGKLPLWAKRLLGDDDV). The span at 810–824 (EMLKTPSKDSLDPDP) shows a compositional bias: basic and acidic residues. A compositionally biased stretch (low complexity) spans 908–920 (ASLLSESESPQEA). Ser944 is subject to Phosphoserine. The interval 962-1055 (EVEAGPGDQQ…PSSSLPQTPE (94 aa)) is disordered. 2 stretches are compositionally biased toward polar residues: residues 971-981 (QGDSYLRVSSD) and 1045-1054 (VPSSSLPQTP). Phosphothreonine is present on Thr1053. Residues Ser1070, Ser1093, Ser1101, Ser1123, Ser1144, Ser1228, Ser1248, and Ser1249 each carry the phosphoserine modification. The WD 14 repeat unit spans residues 1132–1173 (GGSQPRAGTGYASPDRTHVLAAGKAEETLEAWRPPPPCLTSL). A WD 15 repeat occupies 1255-1293 (SLGQELQAITTATTPSLDSEGQEPALRSWGNHEARANLR). The residue at position 1268 (Thr1268) is a Phosphothreonine. Residues 1339–1377 (FRPSLPAPESPGLPAHPSNPQLPEARPGIPGGTASLLEP) are disordered.

In terms of assembly, can form homodimers (via C-terminus). Interacts (via C-terminus) with MAPKBP1 (via C-terminus). Interacts with CDK5RAP2, CEP152, CEP63 and KIAA0753. CEP63, CDK5RAP2, CEP152, WDR62 are proposed to form a stepwise assembled complex at the centrosome forming a ring near parental centrioles. Present in fetal brain, enriched within the ventricular and subventricular zone (at protein level). In the embryonic brain it is expressed in mitotic neural precursor cells.

It localises to the nucleus. Its subcellular location is the cytoplasm. The protein localises to the cytoskeleton. It is found in the spindle pole. The protein resides in the microtubule organizing center. It localises to the centrosome. Its subcellular location is the centriole. Functionally, required for cerebral cortical development. Plays a role in neuronal proliferation and migration. Plays a role in mother-centriole-dependent centriole duplication; the function also seems to involve CEP152, CDK5RAP2 and CEP63 through a stepwise assembled complex at the centrosome that recruits CDK2 required for centriole duplication. This is WD repeat-containing protein 62 (WDR62) from Homo sapiens (Human).